The primary structure comprises 403 residues: Phosphopentomutase (403 aa).

6 residues coordinate Mn(2+): Asp-13, Asp-298, His-303, Asp-339, His-340, and His-351.

This sequence belongs to the phosphopentomutase family. Requires Mn(2+) as cofactor.

It is found in the cytoplasm. It catalyses the reaction 2-deoxy-alpha-D-ribose 1-phosphate = 2-deoxy-D-ribose 5-phosphate. The enzyme catalyses alpha-D-ribose 1-phosphate = D-ribose 5-phosphate. It participates in carbohydrate degradation; 2-deoxy-D-ribose 1-phosphate degradation; D-glyceraldehyde 3-phosphate and acetaldehyde from 2-deoxy-alpha-D-ribose 1-phosphate: step 1/2. Isomerase that catalyzes the conversion of deoxy-ribose 1-phosphate (dRib-1-P) and ribose 1-phosphate (Rib-1-P) to deoxy-ribose 5-phosphate (dRib-5-P) and ribose 5-phosphate (Rib-5-P), respectively. In Streptococcus mutans serotype c (strain ATCC 700610 / UA159), this protein is Phosphopentomutase.